A 206-amino-acid polypeptide reads, in one-letter code: Large ribosomal subunit protein uL4 (206 aa).

A disordered region spans residues 45 to 75 (RQGTHSTKTRGEVRGGGRKPWRQKGTGRARQ). Residues 60 to 71 (GGRKPWRQKGTG) are compositionally biased toward basic residues.

This sequence belongs to the universal ribosomal protein uL4 family. As to quaternary structure, part of the 50S ribosomal subunit.

One of the primary rRNA binding proteins, this protein initially binds near the 5'-end of the 23S rRNA. It is important during the early stages of 50S assembly. It makes multiple contacts with different domains of the 23S rRNA in the assembled 50S subunit and ribosome. Functionally, forms part of the polypeptide exit tunnel. The polypeptide is Large ribosomal subunit protein uL4 (Thermoanaerobacter pseudethanolicus (strain ATCC 33223 / 39E) (Clostridium thermohydrosulfuricum)).